A 360-amino-acid chain; its full sequence is Phenylalanine--tRNA ligase alpha subunit (360 aa).

Mg(2+) is bound at residue E260.

It belongs to the class-II aminoacyl-tRNA synthetase family. Phe-tRNA synthetase alpha subunit type 1 subfamily. In terms of assembly, tetramer of two alpha and two beta subunits. The cofactor is Mg(2+).

The protein resides in the cytoplasm. It catalyses the reaction tRNA(Phe) + L-phenylalanine + ATP = L-phenylalanyl-tRNA(Phe) + AMP + diphosphate + H(+). This Rhizobium etli (strain ATCC 51251 / DSM 11541 / JCM 21823 / NBRC 15573 / CFN 42) protein is Phenylalanine--tRNA ligase alpha subunit.